A 90-amino-acid polypeptide reads, in one-letter code: Small ribosomal subunit protein bS20 (90 aa).

It belongs to the bacterial ribosomal protein bS20 family.

Its function is as follows. Binds directly to 16S ribosomal RNA. This Francisella philomiragia subsp. philomiragia (strain ATCC 25017 / CCUG 19701 / FSC 153 / O#319-036) protein is Small ribosomal subunit protein bS20.